The sequence spans 191 residues: NF-kappa-B inhibitor-interacting Ras-like protein 2 (191 aa).

The interval 1 to 191 (MGKSCKVVVC…KNKGSGSLDG (191 aa)) is small GTPase-like. 11–18 (GQASVGKT) lines the GTP pocket. The Effector region motif lies at 35 to 43 (MIETQEDIY). GTP contacts are provided by residues 61–65 (DTRGL) and 120–123 (NKCD). Residues 169–191 (TQPQSKSAFPLSRKNKGSGSLDG) form a disordered region.

It belongs to the small GTPase superfamily. Ras family. KappaB-Ras subfamily. As to quaternary structure, interacts with both NF-kappa-B inhibitor alpha (NFKBIA) and beta (NFKBIB) in vitro. However, it probably only interacts with NFKBIB in vivo. Interacts with GFOD1. In terms of tissue distribution, widely expressed.

The protein resides in the cytoplasm. Its function is as follows. Atypical Ras-like protein that acts as a potent regulator of NF-kappa-B activity by preventing the degradation of NF-kappa-B inhibitor beta (NFKBIB) by most signals, explaining why NFKBIB is more resistant to degradation. May act by blocking phosphorylation of NFKBIB and nuclear localization of p65/RELA NF-kappa-B subunit. It is unclear whether it acts as a GTPase. Both GTP- and GDP-bound forms block phosphorylation of NFKBIB. This Homo sapiens (Human) protein is NF-kappa-B inhibitor-interacting Ras-like protein 2 (NKIRAS2).